The primary structure comprises 1357 residues: Vascular endothelial growth factor receptor 2 (1357 aa).

Positions 1-22 (MAKTSYALLLLDILLTFNVAKA) are cleaved as a signal peptide. Topologically, residues 23–774 (IELRFVPDPP…GAEEKMNVEL (752 aa)) are extracellular. 7 Ig-like C2-type domains span residues 32–120 (PTLN…SVAV), 120–222 (VYVF…VAVV), 216–330 (PYIV…ASLI), 335–426 (PFIA…RTFQ), 433–553 (PRIF…VIVF), 556–667 (TRFL…LLHN), and 676–762 (SRIV…ARIS). Residues Asn-35, Asn-44, Asn-66, Asn-97, Asn-161, Asn-209, Asn-247, Asn-272, Asn-303, Asn-307, Asn-407, Asn-501, Asn-560, Asn-621, Asn-631, Asn-640, Asn-681, Asn-688, and Asn-713 are each glycosylated (N-linked (GlcNAc...) asparagine). 2 disulfides stabilise this stretch: Cys-53/Cys-104 and Cys-153/Cys-203. Cysteines 248 and 314 form a disulfide. Cys-457 and Cys-538 form a disulfide bridge. A disulfide bridge links Cys-579 with Cys-651. The cysteines at positions 697 and 746 are disulfide-linked. A helical membrane pass occupies residues 775 to 795 (IMPIGAVVIAMFLWLLIVFVI). Residues 796 to 1357 (RNRKRPNDGD…AEVRYSAPPV (562 aa)) are Cytoplasmic-facing. The 331-residue stretch at 843-1173 (LKLGEPLGRG…FTQLVEHLGN (331 aa)) folds into the Protein kinase domain. Residues 849-857 (LGRGAFGQV) and Lys-877 each bind ATP. Residues 944–975 (YSPYKKRTPRMPNRREVQQDEDPREGDLGLGT) are disordered. Asp-1039 (proton acceptor) is an active-site residue. Phosphotyrosine; by autocatalysis is present on residues Tyr-1065, Tyr-1070, Tyr-1186, and Tyr-1222. A disordered region spans residues 1296–1357 (SLASESSNQT…AEVRYSAPPV (62 aa)). The span at 1298–1312 (ASESSNQTSGYQSGY) shows a compositional bias: polar residues.

Belongs to the protein kinase superfamily. Tyr protein kinase family. CSF-1/PDGF receptor subfamily. As to quaternary structure, interacts with isoform VEGF165 of vegfaa and, to a lesser extent, with isoform VEGF171 of vegfab. Interacts (via juxtamembrane region) with chaperone pdcl3 (via thioredoxin fold region); the interaction leads to increased vegfr2 abundance through inhibition of its ubiquitination and degradation. In terms of tissue distribution, first expressed in embryos between 5- and 7-somites in the bilateral stripes that contain the developing angioblasts, and then localized to the intermediate cell mass (ICM) and the developing vasculature. By 30 hpf, expressed in the major trunk, head and intersomitic vessels, persisting through 4 dpf when expression is seen in developing subintestinal veins and in the remaining vasculature.

It localises to the cell membrane. It is found in the cytoplasm. Its subcellular location is the nucleus. The protein localises to the cytoplasmic vesicle. The protein resides in the early endosome. It localises to the cell junction. It is found in the endoplasmic reticulum. It catalyses the reaction L-tyrosyl-[protein] + ATP = O-phospho-L-tyrosyl-[protein] + ADP + H(+). Receptor for VEGF or VEGFC. Has a tyrosine-protein kinase activity. Combinations of multiple VEGF receptors are required for development of different blood vessel types in the embryo. Involved in angiogenesis, specifically in VEGF-induced sprouting of new blood vessels. Particularly involved in artery formation. Does not appear to be required for hematopoiesis. This is Vascular endothelial growth factor receptor 2 from Danio rerio (Zebrafish).